Reading from the N-terminus, the 386-residue chain is Adiponectin receptor protein 2 (386 aa).

Residues 1–72 (MNEPAKHRLG…ECHDDNSQED (72 aa)) are disordered. Residues 1 to 147 (MNEPAKHRLG…SIFRIHTETG (147 aa)) are Cytoplasmic-facing. Basic and acidic residues predominate over residues 15–31 (PEPDIRLRKGHQLDDTR). Over residues 58-72 (SPEEPECHDDNSQED) the composition is skewed to acidic residues. The helical transmembrane segment at 148–168 (NIWTHLLGCVFFLCLGIFYMF) threads the bilayer. The Extracellular segment spans residues 169–181 (RPNISFVAPLQEK). Residues 182–202 (VVFGLFFLGAILCLSFSWLFH) traverse the membrane as a helical segment. His202 contacts Zn(2+). Topologically, residues 203-213 (TVYCHSEGVSR) are cytoplasmic. A helical transmembrane segment spans residues 214-234 (LFSKLDYSGIALLIMGSFVPW). Topologically, residues 235–245 (LYYSFYCNPQP) are extracellular. Residues 246–266 (CFIYLIVICVLGIAAIIVSQW) form a helical membrane-spanning segment. Residues 267-273 (DMFATPQ) lie on the Cytoplasmic side of the membrane. A helical transmembrane segment spans residues 274-294 (YRGVRAGVFVGLGLSGIIPTL). The Extracellular segment spans residues 295–309 (HYVISEGFLKAATIG). Residues 310–330 (QIGWLMLMASLYITGAALYAA) traverse the membrane as a helical segment. Residues 331 to 348 (RIPERFFPGKCDIWFHSH) are Cytoplasmic-facing. Zn(2+)-binding residues include His348 and His352. Residues 349–369 (QLFHIFVVAGAFVHFHGVSNL) traverse the membrane as a helical segment. Topologically, residues 370–386 (QEFRFMIGGGCTEEDAL) are extracellular.

The protein belongs to the ADIPOR family. In terms of assembly, may form homooligomers and heterooligomers with ADIPOR1. Interacts with APPL2 (via BAR domain); ADIPOQ dissociates this interaction. As to expression, detected in liver and quadriceps muscle (at protein level). Highly expressed in liver. Highly expressed in white adipose tissue, and at intermediate levels in brown adipose tissue. Expressed at intermediate level in heart, kidney, lung and skeletal muscle. Weakly expressed in brain, spleen and testis.

Its subcellular location is the cell membrane. Its function is as follows. Receptor for ADIPOQ, an essential hormone secreted by adipocytes that regulates glucose and lipid metabolism. Required for normal body fat and glucose homeostasis. ADIPOQ-binding activates a signaling cascade that leads to increased PPARA activity, and ultimately to increased fatty acid oxidation and glucose uptake. Has intermediate affinity for globular and full-length adiponectin. Required for normal revascularization after chronic ischemia caused by severing of blood vessels. This is Adiponectin receptor protein 2 from Mus musculus (Mouse).